We begin with the raw amino-acid sequence, 80 residues long: uncharacterized protein (80 aa).

To B.cereus similar ORF in glnR 5'region.

This is an uncharacterized protein from Bacillus cereus.